The following is a 904-amino-acid chain: Protein translocase subunit SecA (904 aa).

ATP contacts are provided by residues Q87, 105–109 (GEGKT), and D512. The disordered stretch occupies residues 851-904 (LAKQQQLSHESDNSALMSQEEANVAASLERKVGRNDPCPCGSGKKYKQCHGRLQ). A compositionally biased stretch (polar residues) spans 853–871 (KQQQLSHESDNSALMSQEE). Zn(2+) is bound by residues C888, C890, C899, and H900. Residues 894-904 (KKYKQCHGRLQ) show a composition bias toward basic residues.

Belongs to the SecA family. Monomer and homodimer. Part of the essential Sec protein translocation apparatus which comprises SecA, SecYEG and auxiliary proteins SecDF-YajC and YidC. Zn(2+) is required as a cofactor.

The protein localises to the cell inner membrane. It localises to the cytoplasm. The catalysed reaction is ATP + H2O + cellular proteinSide 1 = ADP + phosphate + cellular proteinSide 2.. Part of the Sec protein translocase complex. Interacts with the SecYEG preprotein conducting channel. Has a central role in coupling the hydrolysis of ATP to the transfer of proteins into and across the cell membrane, serving both as a receptor for the preprotein-SecB complex and as an ATP-driven molecular motor driving the stepwise translocation of polypeptide chains across the membrane. This Yersinia enterocolitica serotype O:8 / biotype 1B (strain NCTC 13174 / 8081) protein is Protein translocase subunit SecA.